The chain runs to 805 residues: Polycystin-2-like protein 1 (805 aa).

The disordered stretch occupies residues 1 to 59 (MNAVGSPEGQELQKLGSGAWDNPAYSGPPSPHGTLRVCTISSTGPLQPQPKKPEDEPQE). Residues 1 to 103 (MNAVGSPEGQ…ELYIKTTLRE (103 aa)) are Cytoplasmic-facing. The S-palmitoyl cysteine moiety is linked to residue Cys-38. A helical transmembrane segment spans residues 104-124 (LLVYIVFLVDICLLTYGMTSS). Residues 125–356 (SAYYYTKVMS…NWDFFIVGCE (232 aa)) lie on the Extracellular side of the membrane. N-linked (GlcNAc...) asparagine glycans are attached at residues Asn-177 and Asn-207. A disulfide bridge connects residues Cys-210 and Cys-223. N-linked (GlcNAc...) asparagine glycosylation occurs at Asn-241. A helical membrane pass occupies residues 357–376 (VIFCVFIFYYVVEEILELHI). Residues Glu-370 and Glu-373 each coordinate Ca(2+). Topologically, residues 377–384 (HRLRYLSS) are cytoplasmic. A helical membrane pass occupies residues 385–405 (IWNILDLVVILLSIVAVGFHI). Residues Asn-387 and Asp-390 each contribute to the Ca(2+) site. The Extracellular segment spans residues 406-433 (FRTLEVNRLMGKLLQQPNTYADFEFLAF). The helical transmembrane segment at 434–454 (WQTQYNNMNAVNLFFAWIKIF) threads the bilayer. Residues 455–479 (KYISFNKTMTQLSSTLARCAKDILG) are Cytoplasmic-facing. Residues 480–499 (FAVMFFIVFFAYAQLGYLLF) form a helical membrane-spanning segment. Topologically, residues 500-511 (GTQVENFSTFIK) are extracellular. A glycan (N-linked (GlcNAc...) asparagine) is linked at Asn-505. An intramembrane region (pore-forming) is located at residues 512-526 (CIFTQFRIILGDFDY). Topologically, residues 527–536 (NAIDNANRIL) are extracellular. The helical transmembrane segment at 537 to 557 (GPAYFVTYVFFVFFVLLNMFL) threads the bilayer. The Cytoplasmic portion of the chain corresponds to 558-805 (AIINDTYSEV…RGEIPTLQRS (248 aa)). The region spanning 633 to 668 (HEITELTATFTKFDRDGNRILDEKEQEKMRQDLEEE) is the EF-hand domain. 2 coiled-coil regions span residues 650 to 686 (NRIL…IVSS) and 700 to 740 (GWVS…MLER). The tract at residues 704–763 (GEEFYMLTRRVLQLETVLEGVVSQIDAVGSKLKMLERKGWLAPSPGVKEQAIWKHPQPAP) is required for homooligomerization. Residues 759–805 (PQPAPAVTPDPWGVQGGQESEVPYKREEEALEERRLSRGEIPTLQRS) are disordered. Positions 780–796 (VPYKREEEALEERRLSR) are enriched in basic and acidic residues.

Belongs to the polycystin family. As to quaternary structure, oligomer. Functional PKD2L1 homotetramer can be formed either through C-terminal trimerization followed by N-terminal dimerization of a fourth subunit with a subunit in the trimer or through dimerization followed by trimerization. Heterotetramer with either PKD1L1, PKD1L3 or PKD1; the heterotetrameric complex contains three PKD1L2 chains plus one chain from another family member. Interacts with PKD1L1, forming a ciliary calcium channel. Interacts with PKD1L3, forming a cation channel that is activated by low extracellular pH. Interacts with PKD1; this heteromeric functional cation channels is opened by hypo-osmotic stimulation. Interacts with RACK1; inhibits the channel activity possibly by impairing localization to the cell membrane. In terms of processing, palmitoylation is important for expression at the cell membrane and for channel activity. As to expression, detected in taste bud cells in fungiform papillae (at protein level). Ubiquitous. Expressed in adult heart, skeletal muscle, brain, spleen, testis, retina and liver. Isoform 4 appears to be expressed only in transformed lymphoblasts.

The protein resides in the cell projection. It localises to the cilium membrane. The protein localises to the cell membrane. Its subcellular location is the cytoplasmic vesicle. The enzyme catalyses Ca(2+)(in) = Ca(2+)(out). It carries out the reaction Na(+)(in) = Na(+)(out). The catalysed reaction is K(+)(in) = K(+)(out). It catalyses the reaction Mg(2+)(in) = Mg(2+)(out). The non-selective cation channel is gated following an off-response property by acid: gated open after the removal of acid stimulus, but not during acid application. Channel activity is inhibited by phosphatidylinositol-4,5-bisphosphate (PIP2). Non-selective cation channel activity is substantially increased when either the extracellular or intracellular calcium-ion concentration is raised. Regulation of non-selective cation channel activity by external calcium is bimodal, first sensitizing and subsequently inactivating the current. Homotetrameric, non-selective cation channel that is permeable to sodium, potassium, magnesium and calcium. Also forms functionnal heteromeric channels with PKD1, PKD1L1 and PKD1L3. Pore-forming subunit of a heterotetrameric, non-selective cation channel, formed by PKD1L2 and PKD1L3, that is permeable to sodium, potassium, magnesium and calcium and which may act as a sour taste receptor in gustatory cells; however, its contribution to sour taste perception is unclear in vivo and may be indirect. The homomeric and heteromeric channels formed by PKD1L2 and PKD1L3 are activated by low pH and Ca(2+), but opens only when the extracellular pH rises again and after the removal of acid stimulus. Pore-forming subunit of a calcium-permeant ion channel formed by PKD1L2 and PKD1L1 in primary cilia, where it controls cilium calcium concentration, without affecting cytoplasmic calcium concentration, and regulates sonic hedgehog/SHH signaling and GLI2 transcription. The PKD1L1:PKD2L1 complex channel is mechanosensitive only at high pressures and is highly temperature sensitive. Pore-forming subunit of a calcium-permeant ion channel formed by PKD1L2 and PKD1 that produces a transient increase in intracellular calcium concentration upon hypo-osmotic stimulation (200 mOsm). May play a role in the perception of carbonation taste. May play a role in the sensory perception of water, via a mechanism that activates the channel in response to dilution of salivary bicarbonate and changes in salivary pH. The polypeptide is Polycystin-2-like protein 1 (Homo sapiens (Human)).